The sequence spans 149 residues: Hydrogenase expression/formation protein HupT (149 aa).

Belongs to the HupJ family.

The sequence is that of Hydrogenase expression/formation protein HupT (hupT) from Azotobacter chroococcum mcd 1.